Here is a 255-residue protein sequence, read N- to C-terminus: Indole-3-glycerol phosphate synthase (255 aa).

Belongs to the TrpC family.

The enzyme catalyses 1-(2-carboxyphenylamino)-1-deoxy-D-ribulose 5-phosphate + H(+) = (1S,2R)-1-C-(indol-3-yl)glycerol 3-phosphate + CO2 + H2O. It functions in the pathway amino-acid biosynthesis; L-tryptophan biosynthesis; L-tryptophan from chorismate: step 4/5. The protein is Indole-3-glycerol phosphate synthase of Streptococcus thermophilus (strain CNRZ 1066).